Here is a 364-residue protein sequence, read N- to C-terminus: DNA replication and repair protein RecF (364 aa).

30-37 is a binding site for ATP; sequence GENGSGKT.

Belongs to the RecF family.

Its subcellular location is the cytoplasm. The RecF protein is involved in DNA metabolism; it is required for DNA replication and normal SOS inducibility. RecF binds preferentially to single-stranded, linear DNA. It also seems to bind ATP. This is DNA replication and repair protein RecF from Xylella fastidiosa (strain M12).